We begin with the raw amino-acid sequence, 214 residues long: Thymidylate kinase (214 aa).

10 to 17 contacts ATP; that stretch reads GPDGAGKT.

It belongs to the thymidylate kinase family.

The enzyme catalyses dTMP + ATP = dTDP + ADP. Its function is as follows. Phosphorylation of dTMP to form dTDP in both de novo and salvage pathways of dTTP synthesis. This chain is Thymidylate kinase, found in Levilactobacillus brevis (strain ATCC 367 / BCRC 12310 / CIP 105137 / JCM 1170 / LMG 11437 / NCIMB 947 / NCTC 947) (Lactobacillus brevis).